The following is a 126-amino-acid chain: Larval cuticle protein 2 (126 aa).

Residues 1 to 16 (MFKFVMILAVVGVATA) form the signal peptide. In terms of domain architecture, Chitin-binding type R&amp;R spans 39-100 (ADGFDSSLHT…PSGAWIPTPP (62 aa)).

In terms of biological role, component of the larval cuticle. The polypeptide is Larval cuticle protein 2 (Lcp2) (Drosophila melanogaster (Fruit fly)).